We begin with the raw amino-acid sequence, 325 residues long: L-lactate dehydrogenase (325 aa).

Residues valine 19, aspartate 40, lysine 45, tyrosine 70, and 84-85 (GA) each bind NAD(+). Substrate is bound by residues glutamine 87 and arginine 93. Residues threonine 106, 123–125 (AAN), and serine 148 each bind NAD(+). 125 to 128 (NPVD) lines the substrate pocket. 153–156 (DSAR) contributes to the substrate binding site. Positions 158 and 173 each coordinate beta-D-fructose 1,6-bisphosphate. The active-site Proton acceptor is the histidine 180. Position 225 is a phosphotyrosine (tyrosine 225). Threonine 234 contacts substrate.

Belongs to the LDH/MDH superfamily. LDH family. In terms of assembly, homotetramer.

Its subcellular location is the cytoplasm. It carries out the reaction (S)-lactate + NAD(+) = pyruvate + NADH + H(+). The protein operates within fermentation; pyruvate fermentation to lactate; (S)-lactate from pyruvate: step 1/1. Allosterically activated by fructose 1,6-bisphosphate (FBP). Functionally, catalyzes the conversion of lactate to pyruvate. The polypeptide is L-lactate dehydrogenase (Latilactobacillus sakei (Lactobacillus sakei)).